The sequence spans 525 residues: MSDPVIKRALVSVSDKTGIVEFCRELSGMGVEIFSTGGTLKSLQDSGVSASSISTITGFPEIMDGRVKTLHPKIHGGLLAVRENPEHVKQATENGISFIDLVVVNLYPFEATVARPDVTFEDAIENIDIGGPSMLRSAAKNNESVTVVTDSADYALVLQEMREHNGATKRTTRLTLALKVFELTSRYDRAIASYLAGAVAGEQQGAASKMTVTLERELDMRYGENPHQSAGLYRLTDENGTRSFGDFFEKLHGKELSYNNMLDIAAAVSLIEEFRGEEPTVVIVKHTNPCGVAQAPTLAEAYRRAFSTDTQAPFGGIISFNRPLDMEAAKAVNEIFTEILIAPAFEDGVLEMLMKKKDRRLVLQTNALPKGGWEFKSTPFGMLVQERDSKIVAKEDLTVVTKRQPTEEEIADLMFAWKICKHIKSNTILYVKNRQTYGVGAGQMSRVDSSKIARWKASEVSLDLHGSVVASDAFFPFADGLLAAAEAGVTAVIQPGGSIRDNEVIEAADANNLAMVFTGMRHFKH.

One can recognise an MGS-like domain in the interval 1–149 (MSDPVIKRAL…KNNESVTVVT (149 aa)).

Belongs to the PurH family.

It catalyses the reaction (6R)-10-formyltetrahydrofolate + 5-amino-1-(5-phospho-beta-D-ribosyl)imidazole-4-carboxamide = 5-formamido-1-(5-phospho-D-ribosyl)imidazole-4-carboxamide + (6S)-5,6,7,8-tetrahydrofolate. The catalysed reaction is IMP + H2O = 5-formamido-1-(5-phospho-D-ribosyl)imidazole-4-carboxamide. Its pathway is purine metabolism; IMP biosynthesis via de novo pathway; 5-formamido-1-(5-phospho-D-ribosyl)imidazole-4-carboxamide from 5-amino-1-(5-phospho-D-ribosyl)imidazole-4-carboxamide (10-formyl THF route): step 1/1. The protein operates within purine metabolism; IMP biosynthesis via de novo pathway; IMP from 5-formamido-1-(5-phospho-D-ribosyl)imidazole-4-carboxamide: step 1/1. The chain is Bifunctional purine biosynthesis protein PurH from Pelodictyon phaeoclathratiforme (strain DSM 5477 / BU-1).